The sequence spans 311 residues: Transcriptional repressor scratch 2 (311 aa).

Residues 1–20 are SNAG domain; sequence MPRSFLVKKIKADGFQCSGV. Disordered regions lie at residues 71-90 and 120-156; these read PAYP…PQSS and RRRA…ATAG. Positions 124–146 are enriched in gly residues; the sequence is GAGGDAAGAGDAGGGGGGGGGGE. 4 consecutive C2H2-type zinc fingers follow at residues 161 to 183, 192 to 214, 218 to 240, and 246 to 268; these read HACA…KQTH, RKCP…VLTH, HKCG…MRSH, and FGCA…MQTH. A C2H2-type 5; atypical zinc finger spans residues 274 to 297; that stretch reads YRCRQCDKSFALKSYLHKHCEAAC.

This sequence belongs to the snail C2H2-type zinc-finger protein family.

It localises to the nucleus. In terms of biological role, may be involved in transcriptional regulation. In Mus musculus (Mouse), this protein is Transcriptional repressor scratch 2 (Scrt2).